The primary structure comprises 380 residues: Cytochrome b (380 aa).

The next 4 helical transmembrane spans lie at 33 to 53 (FGSL…FLAM), 77 to 98 (WLIR…YLHI), 113 to 133 (WNIG…GYVL), and 178 to 198 (FFAF…IHLI). Heme b-binding residues include His-83 and His-97. Residues His-182 and His-196 each coordinate heme b. Residue His-201 participates in a ubiquinone binding. 4 helical membrane passes run 226–246 (YKDL…ALFS), 288–308 (LGGV…PVLH), 320–340 (FSQF…WIGG), and 347–367 (FIII…ILVP).

Belongs to the cytochrome b family. In terms of assembly, the cytochrome bc1 complex contains 3 respiratory subunits (MT-CYB, CYC1 and UQCRFS1), 2 core proteins (UQCRC1 and UQCRC2) and probably 6 low-molecular weight proteins. Heme b is required as a cofactor.

The protein resides in the mitochondrion inner membrane. Component of the ubiquinol-cytochrome c reductase complex (complex III or cytochrome b-c1 complex) that is part of the mitochondrial respiratory chain. The b-c1 complex mediates electron transfer from ubiquinol to cytochrome c. Contributes to the generation of a proton gradient across the mitochondrial membrane that is then used for ATP synthesis. In Astronotus ocellatus (Oscar), this protein is Cytochrome b (mt-cyb).